A 1198-amino-acid polypeptide reads, in one-letter code: Integrator complex subunit 2 (1198 aa).

Residues 421 to 437 (FVSLSFCMLLAFSTLVS) traverse the membrane as a helical segment.

This sequence belongs to the Integrator subunit 2 family. Component of the Integrator complex, composed of core subunits INTS1, INTS2, INTS3, INTS4, INTS5, INTS6, INTS7, INTS8, INTS9/RC74, INTS10, INTS11/CPSF3L, INTS12, INTS13, INTS14 and INTS15. The core complex associates with protein phosphatase 2A subunits PPP2CA and PPP2R1A, to form the Integrator-PP2A (INTAC) complex.

The protein localises to the nucleus. Its subcellular location is the nucleus membrane. It is found in the cytoplasm. Functionally, component of the integrator complex, a multiprotein complex that terminates RNA polymerase II (Pol II) transcription in the promoter-proximal region of genes. The integrator complex provides a quality checkpoint during transcription elongation by driving premature transcription termination of transcripts that are unfavorably configured for transcriptional elongation: the complex terminates transcription by (1) catalyzing dephosphorylation of the C-terminal domain (CTD) of Pol II subunit POLR2A/RPB1 and SUPT5H/SPT5, (2) degrading the exiting nascent RNA transcript via endonuclease activity and (3) promoting the release of Pol II from bound DNA. The integrator complex is also involved in terminating the synthesis of non-coding Pol II transcripts, such as enhancer RNAs (eRNAs), small nuclear RNAs (snRNAs), telomerase RNAs and long non-coding RNAs (lncRNAs). Mediates recruitment of cytoplasmic dynein to the nuclear envelope, probably as component of the integrator complex. This is Integrator complex subunit 2 (Ints2) from Mus musculus (Mouse).